The chain runs to 287 residues: Undecaprenyl-diphosphatase (287 aa).

The next 8 helical transmembrane spans lie at 1-21 (MALW…FLPV), 49-69 (MILF…VVFA), 101-121 (LFLL…TLKA), 126-146 (VFAN…LLFW), 160-180 (TGVG…MPGL), 203-223 (YSFF…AIEV), 232-252 (VSVA…IVSL), and 267-287 (FSFY…DLPI).

The protein belongs to the UppP family.

The protein localises to the cell inner membrane. It carries out the reaction di-trans,octa-cis-undecaprenyl diphosphate + H2O = di-trans,octa-cis-undecaprenyl phosphate + phosphate + H(+). Its function is as follows. Catalyzes the dephosphorylation of undecaprenyl diphosphate (UPP). Confers resistance to bacitracin. The sequence is that of Undecaprenyl-diphosphatase from Halorhodospira halophila (strain DSM 244 / SL1) (Ectothiorhodospira halophila (strain DSM 244 / SL1)).